The sequence spans 353 residues: Type 2 DNA topoisomerase 6 subunit A (353 aa).

The 137-residue stretch at 2–138 folds into the Topo IIA-type catalytic domain; the sequence is NRREIAINKL…LGLMPEEDGA (137 aa). Catalysis depends on Tyr96, which acts as the O-(5'-phospho-DNA)-tyrosine intermediate. Mg(2+) contacts are provided by Glu186 and Asp238.

The protein belongs to the TOP6A family. In terms of assembly, homodimer. Heterotetramer of two Top6A and two Top6B chains. Mg(2+) serves as cofactor.

The catalysed reaction is ATP-dependent breakage, passage and rejoining of double-stranded DNA.. In terms of biological role, relaxes both positive and negative superturns and exhibits a strong decatenase activity. This is Type 2 DNA topoisomerase 6 subunit A from Methanothermobacter thermautotrophicus (strain ATCC 29096 / DSM 1053 / JCM 10044 / NBRC 100330 / Delta H) (Methanobacterium thermoautotrophicum).